A 376-amino-acid chain; its full sequence is Chorismate synthase (376 aa).

Residues arginine 39 and arginine 45 each contribute to the NADP(+) site. Residues 115-117, glycine 276, 291-295, and arginine 317 contribute to the FMN site; these read RSS and KPIPT.

It belongs to the chorismate synthase family. As to quaternary structure, homotetramer. It depends on FMNH2 as a cofactor.

It carries out the reaction 5-O-(1-carboxyvinyl)-3-phosphoshikimate = chorismate + phosphate. The protein operates within metabolic intermediate biosynthesis; chorismate biosynthesis; chorismate from D-erythrose 4-phosphate and phosphoenolpyruvate: step 7/7. In terms of biological role, catalyzes the anti-1,4-elimination of the C-3 phosphate and the C-6 proR hydrogen from 5-enolpyruvylshikimate-3-phosphate (EPSP) to yield chorismate, which is the branch point compound that serves as the starting substrate for the three terminal pathways of aromatic amino acid biosynthesis. This reaction introduces a second double bond into the aromatic ring system. This chain is Chorismate synthase, found in Thermotoga maritima (strain ATCC 43589 / DSM 3109 / JCM 10099 / NBRC 100826 / MSB8).